A 544-amino-acid polypeptide reads, in one-letter code: MGSPEDDLIGIPFPDHSSELLSCLNEQRQLGHLCDLTIRTQGLEYRTHRAVLAACSHYFKKLFTEGGGGTVMGTGGGGTASGGAGAGVCELDFVGPEALGALLEFAYTATLTTSSANMPAVLQAARLLEIPCVIAACMEILQGSGLEAPSPDEDDCERARQYLEAFATATTTASTSGMPNGEDSPPQVPLLPPPPPPPRPVARRSRKPRKAFLQTKGARANHLVPEAPTVLTHPLTYEEEEMVGRLGNSGGSGLGDSYSPPTGAASPAEGPLNYEVFEGEEEEEEMAYPPGYGLAQSNEPSLSPEELGSDEDPIDPDLMAYLSSLHQDALTPGLDGQDKLVRKRRSQMPQECPVCHKIIHGAGKLPRHMRTHTGEKPFACEVCGVRFTRNDKLKIHMRKHTGERPYSCPHCPARFLHSYDLKNHMHLHTGDRPYECHLCHKAFAKEDHLQRHLKGQNCLEVRTRRRRKDDVAAPHYPPPSTTTSSPAGLDLSNGHLDTFHLSLARFWEQSATTGPPVTTQGPPEEEEEEGTPTTPQAEGAMESS.

The 82-residue stretch at 34-115 folds into the BTB domain; the sequence is CDLTIRTQGL…AYTATLTTSS (82 aa). Residue Ser-150 is modified to Phosphoserine. Disordered stretches follow at residues 171-221 and 244-314; these read TTAS…ARAN and GRLG…EDPI. The span at 186–200 shows a compositional bias: pro residues; sequence PQVPLLPPPPPPPRP. Basic residues predominate over residues 201-210; it reads VARRSRKPRK. Residues Lys-210 and Lys-216 each carry the N6-acetyllysine; by EP300; alternate modification. Glycyl lysine isopeptide (Lys-Gly) (interchain with G-Cter in ubiquitin); alternate cross-links involve residues Lys-210 and Lys-216. Acidic residues predominate over residues 277-286; sequence FEGEEEEEEM. Lys-339 carries the post-translational modification N6-acetyllysine; by EP300; alternate. A Glycyl lysine isopeptide (Lys-Gly) (interchain with G-Cter in ubiquitin); alternate cross-link involves residue Lys-339. A required for interaction with and acetylation by EP300 region spans residues 348–404; sequence MPQECPVCHKIIHGAGKLPRHMRTHTGEKPFACEVCGVRFTRNDKLKIHMRKHTGER. The C2H2-type 1 zinc-finger motif lies at 350-372; the sequence is QECPVCHKIIHGAGKLPRHMRTH. Position 373 is a phosphothreonine (Thr-373). 2 consecutive C2H2-type zinc fingers follow at residues 378 to 400 and 406 to 428; these read FACE…MRKH and YSCP…MHLH. A C2H2-type 4; atypical zinc finger spans residues 434-458; it reads YECHLCHKAFAKEDHLQRHLKGQNC. Disordered regions lie at residues 465–493 and 507–544; these read RRRK…DLSN and WEQS…MESS. Low complexity-rich tracts occupy residues 511 to 522 and 531 to 544; these read ATTGPPVTTQGP and TPTT…MESS.

As to quaternary structure, homodimerizes. Interacts with NCL, NEDD4 and YBX1. Interacts with HNRNPU (via RNA-binding RGG-box region); the interaction facilitates the recruitment of long non-coding RNA Blnc1 by ZBTB7B. Interacts with HDAC4 and HDAC5; the interaction allows the recruitment of HDAC4 and HDAC5 on CD8 loci for deacetylation and possible inhibition of CD8 genes expression. Post-translationally, acetylated directly and specifically by EP300. EP300-mediated acetylation of Lys-210, Lys-216 and Lys-339 stabilizes the protein by antagonizing ubiquitin conjugation. In terms of processing, ubiquitinated, leading to proteasomal degradation. Competes with acetylation on Lys-210, Lys-216 and Lys-339. In terms of tissue distribution, widely expressed, with a higher level in skin. Expressed in thymus. Restricted to CD4 cells (mature single positive CD4(+) and intermediate CD4(+)CD8(+) cells). Expressed in the luminal epithelial cells in the mammary glands where is up-regulated at late pregnancy and lactation. Expression is enriched in brown fat.

It is found in the nucleus. Its function is as follows. Transcription regulator that acts as a key regulator of lineage commitment of immature T-cell precursors. Exerts distinct biological functions in the mammary epithelial cells and T cells in a tissue-specific manner. Necessary and sufficient for commitment of CD4 lineage, while its absence causes CD8 commitment. Development of immature T-cell precursors (thymocytes) to either the CD4 helper or CD8 killer T-cell lineages correlates precisely with their T-cell receptor specificity for major histocompatibility complex class II or class I molecules, respectively. Cross-antagonism between ZBTB7B and CBF complexes are determinative to CD4 versus CD8 cell fate decision. Suppresses RUNX3 expression and imposes CD4+ lineage fate by inducing the SOCS suppressors of cytokine signaling. induces, as a transcriptional activator, SOCS genes expression which represses RUNX3 expression and promotes the CD4+ lineage fate. During CD4 lineage commitment, associates with multiple sites at the CD8 locus, acting as a negative regulator of the CD8 promoter and enhancers by epigenetic silencing through the recruitment of class II histone deacetylases, such as HDAC4 and HDAC5, to these loci. Regulates the development of IL17-producing CD1d-restricted naural killer (NK) T cells. Also functions as an important metabolic regulator in the lactating mammary glands. Critical feed-forward regulator of insulin signaling in mammary gland lactation, directly regulates expression of insulin receptor substrate-1 (IRS-1) and insulin-induced Akt-mTOR-SREBP signaling. Transcriptional repressor of the collagen COL1A1 and COL1A2 genes. May also function as a repressor of fibronectin and possibly other extracellular matrix genes. Potent driver of brown fat development, thermogenesis and cold-induced beige fat formation. Recruits the brown fat lncRNA 1 (Blnc1):HNRNPU ribonucleoprotein complex to activate thermogenic gene expression in brown and beige adipocytes. This is Zinc finger and BTB domain-containing protein 7B from Mus musculus (Mouse).